A 355-amino-acid chain; its full sequence is Homoserine O-succinyltransferase (355 aa).

C146 (acyl-thioester intermediate) is an active-site residue. Positions 167 and 196 each coordinate substrate. H239 acts as the Proton acceptor in catalysis. E241 is a catalytic residue. R253 serves as a coordination point for substrate.

This sequence belongs to the MetA family.

It is found in the cytoplasm. It catalyses the reaction L-homoserine + succinyl-CoA = O-succinyl-L-homoserine + CoA. The protein operates within amino-acid biosynthesis; L-methionine biosynthesis via de novo pathway; O-succinyl-L-homoserine from L-homoserine: step 1/1. In terms of biological role, transfers a succinyl group from succinyl-CoA to L-homoserine, forming succinyl-L-homoserine. The polypeptide is Homoserine O-succinyltransferase (Methylococcus capsulatus (strain ATCC 33009 / NCIMB 11132 / Bath)).